Here is a 30-residue protein sequence, read N- to C-terminus: Photosystem II reaction center protein Psb30 (30 aa).

At 1–6 the chain is on the lumenal side; it reads EVIAQL. A helical transmembrane segment spans residues 7-21; it reads TMIAMIGIAGPMIIF. The Cytoplasmic portion of the chain corresponds to 22–30; that stretch reads LLAVRRGNL.

The protein belongs to the Psb30/Ycf12 family. In terms of assembly, PSII is composed of 1 copy each of membrane proteins PsbA, PsbB, PsbC, PsbD, PsbE, PsbF, PsbH, PsbI, PsbJ, PsbK, PsbL, PsbM, PsbT, PsbX, PsbY, PsbZ, Psb30/Ycf12, peripheral proteins PsbO, CyanoQ (PsbQ), PsbU, PsbV and a large number of cofactors. It forms dimeric complexes. PSII binds multiple chlorophylls, carotenoids and specific lipids. serves as cofactor.

Its subcellular location is the cellular thylakoid membrane. In terms of biological role, a core subunit of photosystem II (PSII), probably helps stabilize the reaction center. PSII is a light-driven water plastoquinone oxidoreductase, using light energy to abstract electrons from H(2)O, generating a proton gradient subsequently used for ATP formation. The protein is Photosystem II reaction center protein Psb30 of Thermostichus vulcanus (Synechococcus vulcanus).